The following is a 1250-amino-acid chain: Ras-associated and pleckstrin homology domains-containing protein 1 (1250 aa).

M1 is subject to N-acetylmethionine. Residues 1-23 (MEQLSDEEIDHGAEEDSDKEDQD) show a composition bias toward acidic residues. Residues 1–26 (MEQLSDEEIDHGAEEDSDKEDQDLDK) are disordered. Phosphoserine occurs at positions 5, 17, 54, 150, 192, 203, and 205. The interval 179-217 (TKPLVTNQHRRTASAGTVSDAEVHSISNSSHSSITSAAS) is disordered. The segment covering 202–217 (HSISNSSHSSITSAAS) has biased composition (low complexity). Residues 269-355 (KKLVIRVHMS…NKLIFMERIE (87 aa)) form the Ras-associating domain. One can recognise a PH domain in the interval 396-505 (VPEIEGVLWL…WVNGIRIAKY (110 aa)). Residues Y426 and Y456 each carry the phosphotyrosine; by ABL1 modification. A compositionally biased stretch (low complexity) spans 535–551 (KSGSSSSSIPESQSNHS). Disordered regions lie at residues 535-570 (KSGSSSSSIPESQSNHSNQSDSGVSDTQPAGHVRSQ), 588-663 (EESS…AAPM), 675-1036 (NASQ…SGVN), 1050-1162 (APVL…LSVQ), and 1176-1250 (KSIT…SRDW). Polar residues predominate over residues 552 to 570 (NQSDSGVSDTQPAGHVRSQ). Residues 588–597 (EESSKARMES) show a composition bias toward basic and acidic residues. S610 is modified (phosphoserine). Residues 624–650 (PSPPLPPPPPPPPPPPPPPPPPPPPLP) are compositionally biased toward pro residues. The span at 651–662 (SQSAPSAGSAAP) shows a compositional bias: low complexity. 2 stretches are compositionally biased toward pro residues: residues 707–721 (GVVPPPPPPPPPPTP) and 760–781 (PPTPPPPPPIPAPLPPQAPPKP). The segment covering 791–802 (TKTVAPVVTQAA) has biased composition (low complexity). Pro residues-rich tracts occupy residues 803-814 (PPTPTPPVPPAK) and 823-840 (YIPPSPPTPPVPVPPPTL). Position 827 is a phosphoserine (S827). At T830 the chain carries Phosphothreonine. Phosphoserine occurs at positions 845, 853, and 894. A compositionally biased stretch (pro residues) spans 909-947 (IPVPSPDFPPPPPESSLVFPPPPPSPVPAPPPPPPPTAS). Positions 948–968 (PTPDKSGSPGKKTSKTSSPGG) are enriched in low complexity. S965 carries the post-translational modification Phosphoserine. T974 is modified (phosphothreonine). Over residues 976-986 (QRNSSIKSSSG) the composition is skewed to polar residues. Phosphoserine is present on residues S996 and S1012. Composition is skewed to pro residues over residues 1018 to 1027 (LPPPAAPPKP) and 1065 to 1088 (PSPPSDSDFPPPPPETELPLPPIE). 2 stretches are compositionally biased toward polar residues: residues 1131-1144 (TRLTQAEISEQPTM) and 1151-1161 (VPTSPKSSLSV). S1183 is modified (phosphoserine). Position 1226 is a phosphotyrosine; by ABL1 (Y1226). A compositionally biased stretch (basic and acidic residues) spans 1238-1250 (PKRDQNTKLSRDW).

This sequence belongs to the MRL family. As to quaternary structure, interacts with EVL and VASP and targets them to the leading edge. Interacts (via Ras associating and PH domains) with RAC1. In terms of tissue distribution, isoform RMO1-RAPH1 is ubiquitously expressed with highest levels in brain, heart, ovary and developing embryo. Isoform RMO1 is widely expressed with highest levels in liver. Low expression in B-cells.

The protein localises to the cell membrane. Its subcellular location is the cell projection. It localises to the lamellipodium. The protein resides in the filopodium. It is found in the cytoplasm. The protein localises to the cytoskeleton. Its function is as follows. Mediator of localized membrane signals. Implicated in the regulation of lamellipodial dynamics. Negatively regulates cell adhesion. This Homo sapiens (Human) protein is Ras-associated and pleckstrin homology domains-containing protein 1 (RAPH1).